A 384-amino-acid polypeptide reads, in one-letter code: MRLSVLLSLLPLALGAPAVEQRSEAAPLIEARGEMVANKYIVKFKEGSALSALDAAMEKISGKPDHVYKNVFSGFAATLDENMVRVLRAHPDVEYIEQDAVVTINAAQTNAPWGLARISSTSPGTSTYYYDESAGQGSCVYVIDTGIEASHPEFEGRAQMVKTYYYSSRDGNGHGTHCAGTVGSRTYGVAKKTQLFGVKVLDDNGSGQYSTIIAGMDFVASDKNNRNCPKGVVASLSLGGGYSSSVNSAAARLQSSGVMVAVAAGNNNADARNYSPASEPSVCTVGASDRYDRRSSFSNYGSVLDIFGPGTSILSTWIGGSTRSISGTSMATPHVAGLAAYLMTLGKTTAASACRYIADTANKGDLSNIPFGTVNLLAYNNYQA.

A signal peptide spans 1-15 (MRLSVLLSLLPLALG). Positions 16-105 (APAVEQRSEA…IEQDAVVTIN (90 aa)) are excised as a propeptide. Residues 39–104 (KYIVKFKEGS…YIEQDAVVTI (66 aa)) form the Inhibitor I9 domain. The region spanning 112 to 384 (PWGLARISST…NLLAYNNYQA (273 aa)) is the Peptidase S8 domain. T121 provides a ligand contact to Ca(2+). C139 and C228 form a disulfide bridge. Residues D144 and H174 each act as charge relay system in the active site. Ca(2+)-binding residues include P280, V282, and D305. C283 and C354 are disulfide-bonded. S329 serves as the catalytic Charge relay system. D365 is a binding site for Ca(2+).

It belongs to the peptidase S8 family. The cofactor is Ca(2+).

It carries out the reaction Hydrolysis of keratin, and of other proteins with subtilisin-like specificity. Hydrolyzes peptide amides.. Its function is as follows. Hydrolyzes keratin at aromatic and hydrophobic residues. The protein is Proteinase K (PROK) of Parengyodontium album (Tritirachium album).